Reading from the N-terminus, the 213-residue chain is Small ribosomal subunit protein uS3 (213 aa).

The KH type-2 domain maps to 38 to 106 (IRKYVKKTLY…EFSIEVNEIR (69 aa)).

It belongs to the universal ribosomal protein uS3 family. As to quaternary structure, part of the 30S ribosomal subunit. Forms a tight complex with proteins S10 and S14.

Its function is as follows. Binds the lower part of the 30S subunit head. Binds mRNA in the 70S ribosome, positioning it for translation. The sequence is that of Small ribosomal subunit protein uS3 from Oleidesulfovibrio alaskensis (strain ATCC BAA-1058 / DSM 17464 / G20) (Desulfovibrio alaskensis).